A 122-amino-acid polypeptide reads, in one-letter code: Serum amyloid A-2 protein (122 aa).

Residues 1–18 (MKLLSGLLLCSLVLGVSG) form the signal peptide. A Pyrrolidone carboxylic acid modification is found at Gln19. Residues 90 to 122 (GAEDSMADQAANEWGRSGKDPNHFRPKGLPDKY) are disordered. Residues 105–122 (RSGKDPNHFRPKGLPDKY) are compositionally biased toward basic and acidic residues.

The protein belongs to the SAA family. As to quaternary structure, apolipoprotein of the HDL complex. In terms of tissue distribution, expressed by the liver; secreted in plasma.

The protein resides in the secreted. Its function is as follows. Major acute phase reactant. The chain is Serum amyloid A-2 protein (SAA2) from Oryctolagus cuniculus (Rabbit).